A 131-amino-acid chain; its full sequence is D-ribose pyranase (131 aa).

The Proton donor role is filled by H20. Residues D28, H98, and 120-122 (YSN) contribute to the substrate site.

Belongs to the RbsD / FucU family. RbsD subfamily. As to quaternary structure, homodecamer.

It localises to the cytoplasm. The catalysed reaction is beta-D-ribopyranose = beta-D-ribofuranose. The protein operates within carbohydrate metabolism; D-ribose degradation; D-ribose 5-phosphate from beta-D-ribopyranose: step 1/2. Catalyzes the interconversion of beta-pyran and beta-furan forms of D-ribose. In Limosilactobacillus reuteri (strain DSM 20016) (Lactobacillus reuteri), this protein is D-ribose pyranase.